We begin with the raw amino-acid sequence, 549 residues long: Chaperonin GroEL (549 aa).

Residues 29 to 32 (TAGP), lysine 50, 86 to 90 (DGTTT), glycine 418, and aspartate 499 contribute to the ATP site.

It belongs to the chaperonin (HSP60) family. Forms a cylinder of 14 subunits composed of two heptameric rings stacked back-to-back. Interacts with the co-chaperonin GroES.

The protein localises to the cytoplasm. It catalyses the reaction ATP + H2O + a folded polypeptide = ADP + phosphate + an unfolded polypeptide.. In terms of biological role, together with its co-chaperonin GroES, plays an essential role in assisting protein folding. The GroEL-GroES system forms a nano-cage that allows encapsulation of the non-native substrate proteins and provides a physical environment optimized to promote and accelerate protein folding. This Wolbachia sp. subsp. Drosophila simulans (strain wRi) protein is Chaperonin GroEL.